Consider the following 311-residue polypeptide: Olfactory receptor 52J3 (311 aa).

At 1–27 (MFYHNKSIFHPVTFFLIGIPGLEDFHM) the chain is on the extracellular side. Residue N5 is glycosylated (N-linked (GlcNAc...) asparagine). The chain crosses the membrane as a helical span at residues 28–48 (WISGPFCSVYLVALLGNATIL). The Cytoplasmic segment spans residues 49–56 (LVIKVEQT). A helical transmembrane segment spans residues 57 to 77 (LREPMFYFLAILSTIDLALST). Residues 78-101 (TSVPRMLGIFWFDAHEINYGACVA) are Extracellular-facing. C99 and C191 form a disulfide bridge. Residues 102–122 (QMFLIHAFTGMEAEVLLAMAF) traverse the membrane as a helical segment. The Cytoplasmic portion of the chain corresponds to 123 to 141 (DRYVAVCAPLHYATILTSQ). The helical transmembrane segment at 142–162 (VLVGISMCIVIRPVLLTLPMV) threads the bilayer. The Extracellular segment spans residues 163-198 (YLIYRLPFCQAHIIAHSYCEHMGIAKLSCGNIRING). The chain crosses the membrane as a helical span at residues 199–218 (IYGLFVVSFFVLNLVLIGIS). Over 219-238 (YVYILRAVFRLPSHDAQLKA) the chain is Cytoplasmic. The helical transmembrane segment at 239–259 (LSTCGAHVGVICVFYIPSVFS) threads the bilayer. Residues 260–274 (FLTHRFGHQIPGYIH) lie on the Extracellular side of the membrane. Residues 275–295 (ILVANLYLIIPPSLNPIIYGV) form a helical membrane-spanning segment. The Cytoplasmic portion of the chain corresponds to 296–311 (RTKQIRERVLYVFTKK).

The protein belongs to the G-protein coupled receptor 1 family.

It localises to the cell membrane. Its function is as follows. Odorant receptor. This is Olfactory receptor 52J3 (OR52J3) from Homo sapiens (Human).